A 447-amino-acid polypeptide reads, in one-letter code: Exodeoxyribonuclease 7 large subunit (447 aa).

It belongs to the XseA family. In terms of assembly, heterooligomer composed of large and small subunits.

Its subcellular location is the cytoplasm. It carries out the reaction Exonucleolytic cleavage in either 5'- to 3'- or 3'- to 5'-direction to yield nucleoside 5'-phosphates.. Its function is as follows. Bidirectionally degrades single-stranded DNA into large acid-insoluble oligonucleotides, which are then degraded further into small acid-soluble oligonucleotides. The protein is Exodeoxyribonuclease 7 large subunit of Streptococcus mutans serotype c (strain ATCC 700610 / UA159).